Consider the following 293-residue polypeptide: Homoserine kinase (293 aa).

83 to 93 (RPKSGLGSSGA) serves as a coordination point for ATP.

It belongs to the GHMP kinase family. Homoserine kinase subfamily.

It is found in the cytoplasm. It catalyses the reaction L-homoserine + ATP = O-phospho-L-homoserine + ADP + H(+). The protein operates within amino-acid biosynthesis; L-threonine biosynthesis; L-threonine from L-aspartate: step 4/5. Functionally, catalyzes the ATP-dependent phosphorylation of L-homoserine to L-homoserine phosphate. The polypeptide is Homoserine kinase (Pyrococcus horikoshii (strain ATCC 700860 / DSM 12428 / JCM 9974 / NBRC 100139 / OT-3)).